Reading from the N-terminus, the 172-residue chain is Adenine phosphoribosyltransferase (172 aa).

Belongs to the purine/pyrimidine phosphoribosyltransferase family. Homodimer.

The protein localises to the cytoplasm. The enzyme catalyses AMP + diphosphate = 5-phospho-alpha-D-ribose 1-diphosphate + adenine. It participates in purine metabolism; AMP biosynthesis via salvage pathway; AMP from adenine: step 1/1. In terms of biological role, catalyzes a salvage reaction resulting in the formation of AMP, that is energically less costly than de novo synthesis. The chain is Adenine phosphoribosyltransferase from Roseiflexus sp. (strain RS-1).